A 200-amino-acid chain; its full sequence is Outer-membrane lipoprotein LolB (200 aa).

Positions 1–18 are cleaved as a signal peptide; sequence MRRGRLLIAGLAALVLSA. C19 is lipidated: N-palmitoyl cysteine. C19 carries the S-diacylglycerol cysteine lipid modification.

This sequence belongs to the LolB family. As to quaternary structure, monomer.

The protein localises to the cell outer membrane. Its function is as follows. Plays a critical role in the incorporation of lipoproteins in the outer membrane after they are released by the LolA protein. The sequence is that of Outer-membrane lipoprotein LolB from Alkalilimnicola ehrlichii (strain ATCC BAA-1101 / DSM 17681 / MLHE-1).